Consider the following 508-residue polypeptide: Chromosomal replication initiator protein DnaA (508 aa).

The segment at 1–90 is domain I, interacts with DnaA modulators; the sequence is MSVELWQQCV…RRSSAPRAAP (90 aa). Residues 91–171 form a domain II region; sequence NAPVSAAVAA…QVEGALKHTS (81 aa). Residues 130–160 are disordered; that stretch reads EVEEPSSRDSFDSMSDSGSVPAASGRTEQRT. The domain III, AAA+ region stretch occupies residues 172-388; it reads YLNRTFTFET…GALKRVIAHS (217 aa). Residues glycine 216, glycine 218, lysine 219, and threonine 220 each coordinate ATP. Positions 389–508 are domain IV, binds dsDNA; that stretch reads HFMGRDITIE…YKNLLRTLTT (120 aa).

This sequence belongs to the DnaA family. In terms of assembly, oligomerizes as a right-handed, spiral filament on DNA at oriC.

It localises to the cytoplasm. Its function is as follows. Plays an essential role in the initiation and regulation of chromosomal replication. ATP-DnaA binds to the origin of replication (oriC) to initiate formation of the DNA replication initiation complex once per cell cycle. Binds the DnaA box (a 9 base pair repeat at the origin) and separates the double-stranded (ds)DNA. Forms a right-handed helical filament on oriC DNA; dsDNA binds to the exterior of the filament while single-stranded (ss)DNA is stabiized in the filament's interior. The ATP-DnaA-oriC complex binds and stabilizes one strand of the AT-rich DNA unwinding element (DUE), permitting loading of DNA polymerase. After initiation quickly degrades to an ADP-DnaA complex that is not apt for DNA replication. Binds acidic phospholipids. This is Chromosomal replication initiator protein DnaA from Pseudomonas entomophila (strain L48).